The primary structure comprises 747 residues: Fibroblast growth factor receptor (747 aa).

An N-terminal signal peptide occupies residues 1-24 (MIQLQNTFIFIALTIFTSASTTSL). Residues 25–288 (KNETKPLNTI…TEEIPQDTHY (264 aa)) are Extracellular-facing. N-linked (GlcNAc...) asparagine glycosylation is found at asparagine 26, asparagine 42, and asparagine 63. The tract at residues 47–68 (EEDLFDTNGAPKSDTVNASTTT) is disordered. Ig-like C2-type domains lie at 74–167 (PRWV…YELD) and 175–267 (PPVL…AWLT). Cysteine 99 and cysteine 151 are oxidised to a cystine. N-linked (GlcNAc...) asparagine glycosylation is found at asparagine 161, asparagine 185, asparagine 217, asparagine 227, and asparagine 240. Cysteine 198 and cysteine 251 are oxidised to a cystine. The helical transmembrane segment at 289–309 (LIYIFGVVCFIILLAFIVYMC) threads the bilayer. Topologically, residues 310 to 747 (NSRYQNKDPP…NGHARMQSDV (438 aa)) are cytoplasmic. Residues 377-660 (ILLHERIDEG…QLVEDLDRML (284 aa)) enclose the Protein kinase domain. ATP contacts are provided by residues 383–391 (IDEGFFGQV) and lysine 412. The active-site Proton acceptor is the aspartate 525. At tyrosine 556 the chain carries Phosphotyrosine; by autocatalysis. Residues 679–731 (YLPSDVDSNEDTESRDSANATGEDSDSVFEPIDGHGAHAYEVDEAGPLLNPQP) are disordered. The span at 710-719 (IDGHGAHAYE) shows a compositional bias: basic and acidic residues.

It belongs to the protein kinase superfamily. Tyr protein kinase family. Fibroblast growth factor receptor subfamily.

The protein resides in the membrane. The catalysed reaction is L-tyrosyl-[protein] + ATP = O-phospho-L-tyrosyl-[protein] + ADP + H(+). In terms of biological role, receptor for basic fibroblast growth factor. This chain is Fibroblast growth factor receptor (FGFR), found in Ciona intestinalis (Transparent sea squirt).